The chain runs to 512 residues: Maturase K (512 aa).

The protein belongs to the intron maturase 2 family. MatK subfamily.

It localises to the plastid. Its subcellular location is the chloroplast. Functionally, usually encoded in the trnK tRNA gene intron. Probably assists in splicing its own and other chloroplast group II introns. In Oenothera glazioviana (Large-flowered evening primrose), this protein is Maturase K.